Consider the following 482-residue polypeptide: Tektin (482 aa).

Coiled coils occupy residues C100–I129, A171–V204, R282–S324, V376–R407, and R441–G478. Residues E311–R330 form a disordered region. R462 carries the post-translational modification Asymmetric dimethylarginine.

Belongs to the tektin family. In terms of processing, asymmetrically dimethylated at Arg-462 during flagellum resorption. Probably methylated by PRMT1.

It localises to the cytoplasm. Its subcellular location is the cytoskeleton. The protein resides in the flagellum axoneme. It is found in the flagellum basal body. In terms of biological role, structural component of ciliary and flagellar microtubules. Plays a key role in the assembly or attachment of the inner dynein arm to microtubules in flagella and cilia. Forms filamentous polymers in the walls of ciliary and flagellar microtubules. The polypeptide is Tektin (Chlamydomonas reinhardtii (Chlamydomonas smithii)).